A 138-amino-acid polypeptide reads, in one-letter code: Large ribosomal subunit protein uL16 (138 aa).

Over residues 1–16 the composition is skewed to basic residues; it reads MLIPRRVKHRKQHHPG. Residues 1–24 form a disordered region; it reads MLIPRRVKHRKQHHPGRSGAATGG.

The protein belongs to the universal ribosomal protein uL16 family. Part of the 50S ribosomal subunit.

Its function is as follows. Binds 23S rRNA and is also seen to make contacts with the A and possibly P site tRNAs. The protein is Large ribosomal subunit protein uL16 of Paenarthrobacter aurescens (strain TC1).